A 615-amino-acid chain; its full sequence is RUN domain-containing protein 1 (615 aa).

The segment at 15 to 41 is disordered; the sequence is TAVGPKAKDEEEEEEEEESLPPCETVR. A compositionally biased stretch (acidic residues) spans 24-33; the sequence is EEEEEEEEES. Ser73 is modified (phosphoserine). Coiled-coil stretches lie at residues 76 to 102 and 163 to 238; these read DATV…LSSH and RVRG…NLNE. The tract at residues 147-180 is disordered; sequence DPCGGDESDVLPGDRPRVRGEDQSEQEKRERLET. Residues 158–180 are compositionally biased toward basic and acidic residues; that stretch reads PGDRPRVRGEDQSEQEKRERLET. One can recognise an RUN domain in the interval 423–604; sequence ELTTVVRKEL…LKFSLPVDLA (182 aa). Ser499 is subject to Phosphoserine.

Its function is as follows. May play a role as p53/TP53 inhibitor and thus may have oncogenic activity. The sequence is that of RUN domain-containing protein 1 (Rundc1) from Mus musculus (Mouse).